The following is a 613-amino-acid chain: Transcription factor MTB1 (613 aa).

The segment at 48–130 (LQNKLSDLVE…RVLQKLHMLF (83 aa)) is JAZ-interaction domain. Disordered stretches follow at residues 256–285 (EKNE…FGHD) and 391–441 (AHNV…AERQ). Residues 260–270 (GNNPRLSNSGA) show a composition bias toward polar residues. Composition is skewed to basic and acidic residues over residues 394-417 (VESE…DEKR) and 427-441 (NGRE…AERQ). The tract at residues 430–443 (EEPLNHVEAERQRR) is basic motif; degenerate. The bHLH domain maps to 430-479 (EEPLNHVEAERQRREKLNQRFYALRAVVPNISKMDKASLLGDAIAYITEL). The interval 444–479 (EKLNQRFYALRAVVPNISKMDKASLLGDAIAYITEL) is helix-loop-helix motif. Residues 490–513 (RELRLGSTSRDAITSEDSPSSEIQ) are disordered. Residues 495-512 (GSTSRDAITSEDSPSSEI) are compositionally biased toward polar residues.

Interacts with MYC2 (via N-terminus). MTB1 competes with MED25 for binding to MYC2. Interacts (via N-terminus) with JAZ7.

The protein localises to the nucleus. Functionally, transcription factor that negatively regulates jasmonate (JA) signaling. Negatively regulates JA-dependent response to wounding, JA-induced expression of defense genes, JA-dependent responses against herbivorous insects, and JA-dependent resistance against Botrytis cinerea infection. Plays a positive role in resistance against the bacterial pathogen Pseudomonas syringae pv tomato DC3000. The polypeptide is Transcription factor MTB1 (Solanum lycopersicum (Tomato)).